A 479-amino-acid polypeptide reads, in one-letter code: T-box transcription factor TBX1 (479 aa).

2 stretches are compositionally biased toward low complexity: residues 15–31 and 59–86; these read ASSL…ADPF and YPFA…AAAV. Residues 15–86 form a disordered region; it reads ASSLSGLGSP…GPGASRAAAV (72 aa). A DNA-binding region (T-box) is located at residues 108–286; it reads LWDEFNQLGT…SNPFAKGFRD (179 aa). Residues 311 to 398 are disordered; sequence RNPVASPTQP…APGASEPLHH (88 aa). Positions 313–322 are enriched in polar residues; that stretch reads PVASPTQPNG. A compositionally biased stretch (basic and acidic residues) spans 323–338; it reads SDKDAAEARREFDRDS. Positions 415 to 426 match the Nuclear localization signal motif; the sequence is KSRPAPYPLPGL.

As to quaternary structure, binds DNA as a dimer. Interacts with DSCR6. Interacts with NKX2-5. In terms of tissue distribution, expressed in skeletal muscle, lung and testis. Highly expressed in hair follicle stem cell, but not in terminally differentiating cells.

It localises to the nucleus. Functionally, transcription factor that plays a key role in cardiovascular development by promoting pharyngeal arch segmentation during embryonic development. Also involved in craniofacial muscle development. Together with NKX2-5, acts as a regulator of asymmetric cardiac morphogenesis by promoting expression of PITX2. Acts upstream of TBX1 for the formation of the thymus and parathyroid glands from the third pharyngeal pouch. Required for hair follicle stem cell self-renewal. Binds to the palindromic T site 5'-TTCACACCTAGGTGTGAA-3' DNA sequence. The polypeptide is T-box transcription factor TBX1 (Mus musculus (Mouse)).